The primary structure comprises 342 residues: scyllo-inositol 2-dehydrogenase (NAD(+)) (342 aa).

Belongs to the Gfo/Idh/MocA family.

It catalyses the reaction scyllo-inositol + NAD(+) = scyllo-inosose + NADH + H(+). It functions in the pathway polyol metabolism. In terms of biological role, catalyzes the reversible NAD(+)-dependent oxidation of scyllo-inositol (SI) to 2,4,6/3,5-pentahydroxycyclohexanone (scyllo-inosose or SIS). Is required for SI catabolism that allows B.subtilis to utilize SI as the sole carbon source for growth. Cannot use NADP(+) instead of NAD(+). In Bacillus subtilis (strain 168), this protein is scyllo-inositol 2-dehydrogenase (NAD(+)).